Reading from the N-terminus, the 383-residue chain is Acetylornithine deacetylase (383 aa).

H80 lines the Zn(2+) pocket. The active site involves D82. D112 is a Zn(2+) binding site. The active site involves E144. Zn(2+) is bound by residues E145, E169, and H355.

Belongs to the peptidase M20A family. ArgE subfamily. Homodimer. It depends on Zn(2+) as a cofactor. Co(2+) is required as a cofactor. Glutathione serves as cofactor.

It is found in the cytoplasm. It catalyses the reaction N(2)-acetyl-L-ornithine + H2O = L-ornithine + acetate. It participates in amino-acid biosynthesis; L-arginine biosynthesis; L-ornithine from N(2)-acetyl-L-ornithine (linear): step 1/1. Functionally, catalyzes the hydrolysis of the amide bond of N(2)-acetylated L-amino acids. Cleaves the acetyl group from N-acetyl-L-ornithine to form L-ornithine, an intermediate in L-arginine biosynthesis pathway, and a branchpoint in the synthesis of polyamines. The chain is Acetylornithine deacetylase from Escherichia coli (strain SMS-3-5 / SECEC).